The primary structure comprises 300 residues: Diphthine methyl ester synthase (300 aa).

S-adenosyl-L-methionine contacts are provided by residues leucine 9, aspartate 85, glycine 88, 113–114, leucine 164, leucine 222, and histidine 247; that span reads SV.

It belongs to the diphthine synthase family.

The protein resides in the cytoplasm. It catalyses the reaction 2-[(3S)-amino-3-carboxypropyl]-L-histidyl-[translation elongation factor 2] + 4 S-adenosyl-L-methionine = diphthine methyl ester-[translation elongation factor 2] + 4 S-adenosyl-L-homocysteine + 3 H(+). Its pathway is protein modification; peptidyl-diphthamide biosynthesis. In terms of biological role, S-adenosyl-L-methionine-dependent methyltransferase that catalyzes four methylations of the modified target histidine residue in translation elongation factor 2 (EF-2), to form an intermediate called diphthine methyl ester. The four successive methylation reactions represent the second step of diphthamide biosynthesis. This Yarrowia lipolytica (strain CLIB 122 / E 150) (Yeast) protein is Diphthine methyl ester synthase (DPH5).